The chain runs to 671 residues: DNA ligase (671 aa).

NAD(+)-binding positions include 32–36 (DAEYD), 81–82 (SL), and Glu113. The active-site N6-AMP-lysine intermediate is the Lys115. Residues Arg136, Glu173, Lys290, and Lys314 each coordinate NAD(+). Zn(2+) contacts are provided by Cys408, Cys411, Cys426, and Cys432. The 79-residue stretch at 593-671 (EIDSPFAGKT…ETEMLHLLGS (79 aa)) folds into the BRCT domain.

Belongs to the NAD-dependent DNA ligase family. LigA subfamily. It depends on Mg(2+) as a cofactor. Mn(2+) serves as cofactor.

The catalysed reaction is NAD(+) + (deoxyribonucleotide)n-3'-hydroxyl + 5'-phospho-(deoxyribonucleotide)m = (deoxyribonucleotide)n+m + AMP + beta-nicotinamide D-nucleotide.. In terms of biological role, DNA ligase that catalyzes the formation of phosphodiester linkages between 5'-phosphoryl and 3'-hydroxyl groups in double-stranded DNA using NAD as a coenzyme and as the energy source for the reaction. It is essential for DNA replication and repair of damaged DNA. This Escherichia coli O6:K15:H31 (strain 536 / UPEC) protein is DNA ligase.